A 326-amino-acid chain; its full sequence is Tetraacyldisaccharide 4'-kinase (326 aa).

53-60 contacts ATP; the sequence is SVGGNGKT.

The protein belongs to the LpxK family.

The catalysed reaction is a lipid A disaccharide + ATP = a lipid IVA + ADP + H(+). The protein operates within glycolipid biosynthesis; lipid IV(A) biosynthesis; lipid IV(A) from (3R)-3-hydroxytetradecanoyl-[acyl-carrier-protein] and UDP-N-acetyl-alpha-D-glucosamine: step 6/6. Its function is as follows. Transfers the gamma-phosphate of ATP to the 4'-position of a tetraacyldisaccharide 1-phosphate intermediate (termed DS-1-P) to form tetraacyldisaccharide 1,4'-bis-phosphate (lipid IVA). This is Tetraacyldisaccharide 4'-kinase from Actinobacillus pleuropneumoniae serotype 7 (strain AP76).